A 546-amino-acid chain; its full sequence is MANPQQPLLIKTHKQNPIISFKILSFVITLFVALFLVAPYQVEIKHSNLCKTAQDSQLCLSYVSDLISNEIVTTESDGHSILMKFLVNYVHQMNNAIPVVRKMKNQINDIRQHGALTDCLELLDQSVDFASDSIAAIDKRSRSEHANAQSWLSGVLTNHVTCLDELDSFTKAMINGTNLEELISRAKVALAMLASLTTQDEDVFMTVLGKMPSWVSSMDRKLMESSGKDIIANAVVAQDGTGDYQTLAEAVAAAPDKSKTRYVIYVKRGTYKENVEVASNKMNLMIVGDGMYATTITGSLNVVDGSTTFRSATLAAVGQGFILQDICIQNTAGPAKDQAVALRVGADMSVINRCRIDAYQDTLYAHSQRQFYRDSYVTGTVDFIFGNAAVVFQKCQLVARKPGKYQQNMVTAQGRTDPNQATGTSIQFCNIIASSDLEPVLKEFPTYLGRPWKEYSRTVVMESYLGGLINPAGWAEWDGDFALKTLYYGEFMNNGPGAGTSKRVKWPGYHVITDPAKAMPFTVAKLIQGGSWLRSTGVAYVDGLYD.

The signal sequence occupies residues 1–39 (MANPQQPLLIKTHKQNPIISFKILSFVITLFVALFLVAP). Residues 40–229 (YQVEIKHSNL…RKLMESSGKD (190 aa)) constitute a propeptide that is removed on maturation. Substrate is bound by residues threonine 308 and glutamine 338. Cysteine 327 and cysteine 354 are joined by a disulfide. Aspartate 361 (proton donor) is an active-site residue. Aspartate 382 (nucleophile) is an active-site residue. Cysteine 395 and cysteine 429 are disulfide-bonded. The substrate site is built by arginine 450 and tryptophan 452.

The protein in the N-terminal section; belongs to the PMEI family. It in the C-terminal section; belongs to the pectinesterase family.

It localises to the secreted. The protein resides in the cell wall. It carries out the reaction [(1-&gt;4)-alpha-D-galacturonosyl methyl ester](n) + n H2O = [(1-&gt;4)-alpha-D-galacturonosyl](n) + n methanol + n H(+). The protein operates within glycan metabolism; pectin degradation; 2-dehydro-3-deoxy-D-gluconate from pectin: step 1/5. Pectinesterase may play a role in cell wall metabolism during fruit growth and development prior to ripening and may be required for preparing cell walls for softening by polygalacturonase during fruit ripening. The protein is Pectinesterase 1 (PME1.9) of Solanum lycopersicum (Tomato).